The following is a 349-amino-acid chain: sn-glycerol-3-phosphate import ATP-binding protein UgpC (349 aa).

One can recognise an ABC transporter domain in the interval 4 to 235 (ITLKDVHKTY…PATAFVATFI (232 aa)). Position 37–44 (37–44 (GPSGCGKS)) interacts with ATP.

The protein belongs to the ABC transporter superfamily. sn-glycerol-3-phosphate importer (TC 3.A.1.1.3) family. In terms of assembly, the complex is composed of two ATP-binding proteins (UgpC), two transmembrane proteins (UgpA and UgpE) and a solute-binding protein (UgpB).

The protein localises to the cell inner membrane. The catalysed reaction is sn-glycerol 3-phosphate(out) + ATP + H2O = sn-glycerol 3-phosphate(in) + ADP + phosphate + H(+). Its function is as follows. Part of the ABC transporter complex UgpBAEC involved in sn-glycerol-3-phosphate (G3P) import. Responsible for energy coupling to the transport system. The protein is sn-glycerol-3-phosphate import ATP-binding protein UgpC of Rhizobium meliloti (strain 1021) (Ensifer meliloti).